Here is a 194-residue protein sequence, read N- to C-terminus: Probable GTP-binding protein EngB (194 aa).

In terms of domain architecture, EngB-type G spans 22-194; that stretch reads DLPEYALAGR…AWQFIKEGME (173 aa). GTP-binding positions include 30 to 37, 57 to 61, 75 to 78, 142 to 145, and 174 to 176; these read GRSNVGKS, GKTQT, DVPG, TKAD, and FSS. Positions 37 and 59 each coordinate Mg(2+).

It belongs to the TRAFAC class TrmE-Era-EngA-EngB-Septin-like GTPase superfamily. EngB GTPase family. Requires Mg(2+) as cofactor.

Necessary for normal cell division and for the maintenance of normal septation. This chain is Probable GTP-binding protein EngB, found in Listeria monocytogenes serotype 4b (strain CLIP80459).